Here is a 397-residue protein sequence, read N- to C-terminus: Aromatic-amino-acid aminotransferase (397 aa).

Residues glycine 34, tyrosine 66, tryptophan 131, and asparagine 184 each coordinate substrate. Position 247 is an N6-(pyridoxal phosphate)lysine (lysine 247). Residues arginine 281 and arginine 375 each contribute to the substrate site.

Belongs to the class-I pyridoxal-phosphate-dependent aminotransferase family. In terms of assembly, homodimer. It depends on pyridoxal 5'-phosphate as a cofactor.

It localises to the cytoplasm. The enzyme catalyses an aromatic L-alpha-amino acid + 2-oxoglutarate = an aromatic oxo-acid + L-glutamate. The catalysed reaction is (3S)-3-methyl-L-phenylalanine + 2-oxoglutarate = (3S)-2-oxo-3-phenylbutanoate + L-glutamate. Its pathway is amino-acid biosynthesis; L-phenylalanine biosynthesis; L-phenylalanine from phenylpyruvate (ArAT route): step 1/1. The protein operates within amino-acid biosynthesis; L-tyrosine biosynthesis; L-tyrosine from (4-hydroxyphenyl)pyruvate: step 1/1. Functionally, broad-specificity enzyme that catalyzes the transamination of 2-ketoisocaproate, p-hydroxyphenylpyruvate, and phenylpyruvate to yield leucine, tyrosine, and phenylalanine, respectively. In vitro, is able to catalyze the conversion of beta-methyl phenylpyruvate to the nonproteinogenic amino acid (2S,3S)-beta-methyl-phenylalanine, a building block of the antibiotic mannopeptimycin produced by Streptomyces hygroscopicus NRRL3085. This is Aromatic-amino-acid aminotransferase (tyrB) from Escherichia coli (strain K12).